Here is a 271-residue protein sequence, read N- to C-terminus: Formamidopyrimidine-DNA glycosylase (271 aa).

Catalysis depends on P2, which acts as the Schiff-base intermediate with DNA. The active-site Proton donor is the E3. K57 functions as the Proton donor; for beta-elimination activity in the catalytic mechanism. Positions 90, 109, and 151 each coordinate DNA. An FPG-type zinc finger spans residues 236–270 (HVYSRGGETCTSCGNLLSEIRLGQRTTVFCGICQT). Catalysis depends on R260, which acts as the Proton donor; for delta-elimination activity.

Belongs to the FPG family. In terms of assembly, monomer. It depends on Zn(2+) as a cofactor.

The enzyme catalyses Hydrolysis of DNA containing ring-opened 7-methylguanine residues, releasing 2,6-diamino-4-hydroxy-5-(N-methyl)formamidopyrimidine.. It carries out the reaction 2'-deoxyribonucleotide-(2'-deoxyribose 5'-phosphate)-2'-deoxyribonucleotide-DNA = a 3'-end 2'-deoxyribonucleotide-(2,3-dehydro-2,3-deoxyribose 5'-phosphate)-DNA + a 5'-end 5'-phospho-2'-deoxyribonucleoside-DNA + H(+). Involved in base excision repair of DNA damaged by oxidation or by mutagenic agents. Acts as a DNA glycosylase that recognizes and removes damaged bases. Has a preference for oxidized purines, such as 7,8-dihydro-8-oxoguanine (8-oxoG). Has AP (apurinic/apyrimidinic) lyase activity and introduces nicks in the DNA strand. Cleaves the DNA backbone by beta-delta elimination to generate a single-strand break at the site of the removed base with both 3'- and 5'-phosphates. This is Formamidopyrimidine-DNA glycosylase from Shewanella baltica (strain OS195).